The chain runs to 424 residues: Riboflavin biosynthesis protein RibBA (424 aa).

The segment at 1-204 (MTRFDSIERA…IADLIAWRRK (204 aa)) is DHBP synthase. Residues 28–29 (RE), D33, 141–145 (RPGHT), and E165 each bind D-ribulose 5-phosphate. E29 is a binding site for Mg(2+). Mg(2+) is bound at residue H144. The GTP cyclohydrolase II stretch occupies residues 205–424 (HEKHVLRIAE…QNTAQPGTAL (220 aa)). Residue 259–263 (RVHSE) coordinates GTP. Positions 264, 275, and 277 each coordinate Zn(2+). GTP contacts are provided by residues Q280, 303-305 (EGR), and T325. Residue D337 is the Proton acceptor; for GTP cyclohydrolase activity of the active site. R339 (nucleophile; for GTP cyclohydrolase activity) is an active-site residue. GTP is bound by residues T360 and K365.

This sequence in the N-terminal section; belongs to the DHBP synthase family. The protein in the C-terminal section; belongs to the GTP cyclohydrolase II family. Requires Mg(2+) as cofactor. Mn(2+) serves as cofactor. It depends on Zn(2+) as a cofactor.

The catalysed reaction is D-ribulose 5-phosphate = (2S)-2-hydroxy-3-oxobutyl phosphate + formate + H(+). It carries out the reaction GTP + 4 H2O = 2,5-diamino-6-hydroxy-4-(5-phosphoribosylamino)-pyrimidine + formate + 2 phosphate + 3 H(+). Its pathway is cofactor biosynthesis; riboflavin biosynthesis; 2-hydroxy-3-oxobutyl phosphate from D-ribulose 5-phosphate: step 1/1. It functions in the pathway cofactor biosynthesis; riboflavin biosynthesis; 5-amino-6-(D-ribitylamino)uracil from GTP: step 1/4. Functionally, catalyzes the conversion of D-ribulose 5-phosphate to formate and 3,4-dihydroxy-2-butanone 4-phosphate. Its function is as follows. Catalyzes the conversion of GTP to 2,5-diamino-6-ribosylamino-4(3H)-pyrimidinone 5'-phosphate (DARP), formate and pyrophosphate. The sequence is that of Riboflavin biosynthesis protein RibBA from Rhodococcus erythropolis (strain PR4 / NBRC 100887).